The following is a 205-amino-acid chain: Pyridoxal 5'-phosphate synthase subunit PdxT (205 aa).

53-55 contributes to the L-glutamine binding site; sequence GES. Cys-85 functions as the Nucleophile in the catalytic mechanism. L-glutamine is bound by residues Arg-112 and 140–141; that span reads IR. Residues His-176 and Glu-178 each act as charge relay system in the active site.

The protein belongs to the glutaminase PdxT/SNO family. As to quaternary structure, in the presence of PdxS, forms a dodecamer of heterodimers. Only shows activity in the heterodimer.

It carries out the reaction aldehydo-D-ribose 5-phosphate + D-glyceraldehyde 3-phosphate + L-glutamine = pyridoxal 5'-phosphate + L-glutamate + phosphate + 3 H2O + H(+). The enzyme catalyses L-glutamine + H2O = L-glutamate + NH4(+). Its pathway is cofactor biosynthesis; pyridoxal 5'-phosphate biosynthesis. In terms of biological role, catalyzes the hydrolysis of glutamine to glutamate and ammonia as part of the biosynthesis of pyridoxal 5'-phosphate. The resulting ammonia molecule is channeled to the active site of PdxS. The chain is Pyridoxal 5'-phosphate synthase subunit PdxT from Haloquadratum walsbyi (strain DSM 16790 / HBSQ001).